The chain runs to 156 residues: Arginine repressor (156 aa).

The protein belongs to the ArgR family.

It is found in the cytoplasm. Its pathway is amino-acid biosynthesis; L-arginine biosynthesis [regulation]. Its function is as follows. Regulates arginine biosynthesis genes. The polypeptide is Arginine repressor (Shewanella baltica (strain OS223)).